The chain runs to 491 residues: Probable malate:quinone oxidoreductase (491 aa).

The protein belongs to the MQO family. FAD serves as cofactor.

It carries out the reaction (S)-malate + a quinone = a quinol + oxaloacetate. Its pathway is carbohydrate metabolism; tricarboxylic acid cycle; oxaloacetate from (S)-malate (quinone route): step 1/1. The chain is Probable malate:quinone oxidoreductase from Actinobacillus pleuropneumoniae serotype 7 (strain AP76).